The chain runs to 600 residues: Aspartate--tRNA(Asp/Asn) ligase (600 aa).

Glu-174 lines the L-aspartate pocket. The aspartate stretch occupies residues 198-201 (QLFK). Residue Arg-220 coordinates L-aspartate. ATP is bound by residues 220–222 (RDE) and Gln-229. His-457 serves as a coordination point for L-aspartate. Glu-491 contacts ATP. An L-aspartate-binding site is contributed by Arg-498. ATP is bound at residue 543–546 (GLDR).

This sequence belongs to the class-II aminoacyl-tRNA synthetase family. Type 1 subfamily. In terms of assembly, homodimer.

It is found in the cytoplasm. The catalysed reaction is tRNA(Asx) + L-aspartate + ATP = L-aspartyl-tRNA(Asx) + AMP + diphosphate. In terms of biological role, aspartyl-tRNA synthetase with relaxed tRNA specificity since it is able to aspartylate not only its cognate tRNA(Asp) but also tRNA(Asn). Reaction proceeds in two steps: L-aspartate is first activated by ATP to form Asp-AMP and then transferred to the acceptor end of tRNA(Asp/Asn). The sequence is that of Aspartate--tRNA(Asp/Asn) ligase from Burkholderia orbicola (strain AU 1054).